The following is a 204-amino-acid chain: Large ribosomal subunit protein uL4 (204 aa).

Residues 49–75 (TKGRSDVSGGGKKPWRQKGRGGARAGS) are disordered.

Belongs to the universal ribosomal protein uL4 family. In terms of assembly, part of the 50S ribosomal subunit.

One of the primary rRNA binding proteins, this protein initially binds near the 5'-end of the 23S rRNA. It is important during the early stages of 50S assembly. It makes multiple contacts with different domains of the 23S rRNA in the assembled 50S subunit and ribosome. Functionally, forms part of the polypeptide exit tunnel. This is Large ribosomal subunit protein uL4 from Campylobacter lari (strain RM2100 / D67 / ATCC BAA-1060).